We begin with the raw amino-acid sequence, 621 residues long: Ubiquitin carboxyl-terminal hydrolase MINDY-2 (621 aa).

Disordered regions lie at residues 1-106 (MESS…RGQY) and 119-179 (VGHE…LESF). Serine 94 is subject to Phosphoserine. Residues 145-163 (AAGSEEPSSAGGLSSSCSD) show a composition bias toward low complexity. The active-site Nucleophile is cysteine 266. The active-site Proton acceptor is histidine 448. Residues 507-559 (GQQDQIDQDYLMALSLQQEQQSQEINWEQIPEGISDLELAKKLQEEEDRRASQ) are ubiquitin-binding domain (UBD). The tract at residues 556 to 621 (RASQYYQEQE…EKEKNSCVIL (66 aa)) is disordered. Over residues 558 to 591 (SQYYQEQEQAAAAAAAASTQAQQGQPAQASPSSG) the composition is skewed to low complexity. Basic and acidic residues predominate over residues 597–621 (SERKRKEPREKDKEKEKEKNSCVIL).

The protein belongs to the MINDY deubiquitinase family. FAM63 subfamily.

The enzyme catalyses Thiol-dependent hydrolysis of ester, thioester, amide, peptide and isopeptide bonds formed by the C-terminal Gly of ubiquitin (a 76-residue protein attached to proteins as an intracellular targeting signal).. In terms of biological role, hydrolase that can remove 'Lys-48'-linked conjugated ubiquitin from proteins. Binds to polyubiquitin chains of different linkage types, including 'Lys-6', 'Lys-11', 'Lys-29', 'Lys-33', 'Lys-48' and 'Lys-63'. May play a regulatory role at the level of protein turnover. The protein is Ubiquitin carboxyl-terminal hydrolase MINDY-2 of Homo sapiens (Human).